The chain runs to 565 residues: NAD-dependent malic enzyme (565 aa).

Tyrosine 104 serves as the catalytic Proton donor. Arginine 157 is an NAD(+) binding site. Lysine 175 serves as the catalytic Proton acceptor. The a divalent metal cation site is built by glutamate 246, aspartate 247, and aspartate 270. NAD(+)-binding residues include aspartate 270 and asparagine 418.

Belongs to the malic enzymes family. Homotetramer. The cofactor is Mg(2+). It depends on Mn(2+) as a cofactor.

The enzyme catalyses (S)-malate + NAD(+) = pyruvate + CO2 + NADH. It catalyses the reaction oxaloacetate + H(+) = pyruvate + CO2. The chain is NAD-dependent malic enzyme from Klebsiella pneumoniae (strain 342).